The primary structure comprises 404 residues: Alanyl-tRNA editing protein AlaX-L (404 aa).

Zn(2+) is bound by residues H104, H108, C202, and H206.

It belongs to the class-II aminoacyl-tRNA synthetase family. Editing domain AlaX-L subfamily. The cofactor is Zn(2+).

Its subcellular location is the cytoplasm. Functionally, functions in trans to edit the amino acid moiety from mischarged charged tRNA(Ala). This Pyrococcus horikoshii (strain ATCC 700860 / DSM 12428 / JCM 9974 / NBRC 100139 / OT-3) protein is Alanyl-tRNA editing protein AlaX-L (alaXL).